The following is a 269-amino-acid chain: 4-hydroxy-tetrahydrodipicolinate reductase (269 aa).

NAD(+) contacts are provided by residues 9–14 (GAGGRM) and Glu-35. Position 36 (Arg-36) interacts with NADP(+). Residues 98–100 (GTT) and 122–125 (ASNY) contribute to the NAD(+) site. Residue His-155 is the Proton donor/acceptor of the active site. Residue His-156 participates in (S)-2,3,4,5-tetrahydrodipicolinate binding. The active-site Proton donor is the Lys-159. Residue 165-166 (GT) participates in (S)-2,3,4,5-tetrahydrodipicolinate binding.

It belongs to the DapB family.

Its subcellular location is the cytoplasm. It catalyses the reaction (S)-2,3,4,5-tetrahydrodipicolinate + NAD(+) + H2O = (2S,4S)-4-hydroxy-2,3,4,5-tetrahydrodipicolinate + NADH + H(+). The enzyme catalyses (S)-2,3,4,5-tetrahydrodipicolinate + NADP(+) + H2O = (2S,4S)-4-hydroxy-2,3,4,5-tetrahydrodipicolinate + NADPH + H(+). It functions in the pathway amino-acid biosynthesis; L-lysine biosynthesis via DAP pathway; (S)-tetrahydrodipicolinate from L-aspartate: step 4/4. In terms of biological role, catalyzes the conversion of 4-hydroxy-tetrahydrodipicolinate (HTPA) to tetrahydrodipicolinate. This Actinobacillus pleuropneumoniae serotype 7 (strain AP76) protein is 4-hydroxy-tetrahydrodipicolinate reductase.